The sequence spans 324 residues: Quinolinate synthase 2 (324 aa).

Residues histidine 48 and serine 66 each contribute to the iminosuccinate site. A [4Fe-4S] cluster-binding site is contributed by cysteine 111. Iminosuccinate contacts are provided by residues 137 to 139 (YVN) and serine 154. Cysteine 196 is a [4Fe-4S] cluster binding site. Residues 222 to 224 (HPE) and threonine 239 each bind iminosuccinate. Cysteine 282 contributes to the [4Fe-4S] cluster binding site.

This sequence belongs to the quinolinate synthase family. Type 2 subfamily. The cofactor is [4Fe-4S] cluster.

The protein localises to the cytoplasm. The catalysed reaction is iminosuccinate + dihydroxyacetone phosphate = quinolinate + phosphate + 2 H2O + H(+). It participates in cofactor biosynthesis; NAD(+) biosynthesis; quinolinate from iminoaspartate: step 1/1. Its function is as follows. Catalyzes the condensation of iminoaspartate with dihydroxyacetone phosphate to form quinolinate. In Mesorhizobium japonicum (strain LMG 29417 / CECT 9101 / MAFF 303099) (Mesorhizobium loti (strain MAFF 303099)), this protein is Quinolinate synthase 2.